We begin with the raw amino-acid sequence, 342 residues long: Platelet-activating factor receptor (342 aa).

The Extracellular portion of the chain corresponds to 1–16 (MELNSSSRVDSEFRYT). N-linked (GlcNAc...) asparagine glycosylation is present at N4. Residues 17–38 (LFPIVYSIIFVLGIIANGYVLW) form a helical membrane-spanning segment. At 39-54 (VFARLYPSKKLNEIKI) the chain is on the cytoplasmic side. A helical transmembrane segment spans residues 55–74 (FMVNLTVADLLFLITLPLWI). Over 75–91 (VYYSNQGNWFLPKFLCN) the chain is Extracellular. Residues C90 and C173 are joined by a disulfide bond. Residues 92 to 113 (LAGCLFFINTYCSVAFLGVITY) traverse the membrane as a helical segment. Residues 114–133 (NRFQAVKYPIKTAQATTRKR) lie on the Cytoplasmic side of the membrane. Residues 134-155 (GIALSLVIWVAIVAAASYFLVM) traverse the membrane as a helical segment. At 156–184 (DSTNVVSNKAGSGNITRCFEHYEKGSKPV) the chain is on the extracellular side. N169 carries N-linked (GlcNAc...) asparagine glycosylation. Residues 185-205 (LIIHICIVLGFFIVFLLILFC) traverse the membrane as a helical segment. The Cytoplasmic portion of the chain corresponds to 206–233 (NLVIIHTLLRQPVKQQRNAEVRRRALWM). Residues 234–254 (VCTVLAVFVICFVPHHMVQLP) form a helical membrane-spanning segment. Topologically, residues 255 to 276 (WTLAELGMWPSSNHQAINDAHQ) are extracellular. Residues 277–296 (VTLCLLSTNCVLDPVIYCFL) traverse the membrane as a helical segment. The Cytoplasmic portion of the chain corresponds to 297–342 (TKKFRKHLSEKLNIMRSSQKCSRVTTDTGTEMAIPINHTPVNPIKN).

Belongs to the G-protein coupled receptor 1 family. Interacts with ARRB1.

Its subcellular location is the cell membrane. In terms of biological role, receptor for platelet activating factor, a chemotactic phospholipid mediator that possesses potent inflammatory, smooth-muscle contractile and hypotensive activity. Seems to mediate its action via a G protein that activates a phosphatidylinositol-calcium second messenger system. The chain is Platelet-activating factor receptor (PTAFR) from Cavia porcellus (Guinea pig).